The primary structure comprises 417 residues: Gamma-glutamyl phosphate reductase (417 aa).

This sequence belongs to the gamma-glutamyl phosphate reductase family.

The protein resides in the cytoplasm. The catalysed reaction is L-glutamate 5-semialdehyde + phosphate + NADP(+) = L-glutamyl 5-phosphate + NADPH + H(+). It functions in the pathway amino-acid biosynthesis; L-proline biosynthesis; L-glutamate 5-semialdehyde from L-glutamate: step 2/2. Functionally, catalyzes the NADPH-dependent reduction of L-glutamate 5-phosphate into L-glutamate 5-semialdehyde and phosphate. The product spontaneously undergoes cyclization to form 1-pyrroline-5-carboxylate. The protein is Gamma-glutamyl phosphate reductase of Sodalis glossinidius (strain morsitans).